A 441-amino-acid chain; its full sequence is Ribulose bisphosphate carboxylase large chain (441 aa).

K5 carries the N6,N6,N6-trimethyllysine modification. 2 residues coordinate substrate: N114 and T164. K166 (proton acceptor) is an active-site residue. K168 is a substrate binding site. Mg(2+) contacts are provided by K192, D194, and E195. K192 is subject to N6-carboxylysine. H285 (proton acceptor) is an active-site residue. Positions 286, 318, and 370 each coordinate substrate.

The protein belongs to the RuBisCO large chain family. Type I subfamily. Heterohexadecamer of 8 large chains and 8 small chains; disulfide-linked. The disulfide link is formed within the large subunit homodimers. The cofactor is Mg(2+). The disulfide bond which can form in the large chain dimeric partners within the hexadecamer appears to be associated with oxidative stress and protein turnover.

It is found in the plastid. The protein localises to the chloroplast. It carries out the reaction 2 (2R)-3-phosphoglycerate + 2 H(+) = D-ribulose 1,5-bisphosphate + CO2 + H2O. The catalysed reaction is D-ribulose 1,5-bisphosphate + O2 = 2-phosphoglycolate + (2R)-3-phosphoglycerate + 2 H(+). RuBisCO catalyzes two reactions: the carboxylation of D-ribulose 1,5-bisphosphate, the primary event in carbon dioxide fixation, as well as the oxidative fragmentation of the pentose substrate in the photorespiration process. Both reactions occur simultaneously and in competition at the same active site. In Drosera dichrosepala (Rusty sundew), this protein is Ribulose bisphosphate carboxylase large chain.